Reading from the N-terminus, the 61-residue chain is MFTVFLLVVLATTVVSFTSGRSTFRGRNAAAKASGLVSLTDRRPQCCSHPACNVDHPEICR.

A signal peptide spans 1–20 (MFTVFLLVVLATTVVSFTSG). Positions 21–42 (RSTFRGRNAAAKASGLVSLTDR) are excised as a propeptide. A 4-hydroxyproline mark is found at P44 and P50. Cystine bridges form between C46-C52 and C47-C60. Positions 48-50 (SHP) are ser-Xaa-Pro motif, crucial for potent interaction with nAChR.

The protein belongs to the conotoxin A superfamily. In terms of tissue distribution, expressed by the venom duct.

The protein localises to the secreted. Alpha-conotoxins act on postsynaptic membranes, they bind to the nicotinic acetylcholine receptors (nAChR) and thus inhibit them. This toxin also inhibits high voltage-activated (HVA) calcium channel currents in rat DRG neurons (8% inhibition at 1 uM toxin) probably by activating GABA(B) receptors (GABBR1 and/or GABBR2). The polypeptide is Alpha-conotoxin-like Tx1.2 (Conus textile (Cloth-of-gold cone)).